The following is a 500-amino-acid chain: MNDFPWLTIIVVFPISAGSLMLFLPHRGNKVNKWYTISICILELLLTTYAFCYNFKMDDPLIQLSEDYKWINFCDFYWRMGIDGLSIGTILLTGFITTLATLAAFPVTRDSRLFHFLMLAMYSGQIGSFSSRDLLLFFIMWELELIPVYHLLSMWGGKKRLYSATKFILYTAGSSIFLLIGVLGISLYGSNEPTLNLELLANQSYPVTLEILFYIGFLIAFAVKSPIIPLHTWLPDTHGEAHYSTCMLLAGILLKMGAYGLVRINMELLPHAHSMFSPWLMVVGTIQIIYAASTSPGQRNLKKRIAYSSVSHMGFIIIGISSITDPGLNGAILQIISHGFIGAALFFLAGTSYDRIRLVYLDEMGGMAISIPKIFTMFTILSMASLALPGMSGFVAELIVFFGIITSQKYFVISKIFIIFVMAIGMILTPIYLLSMSRQMFYGYKLINVKNFSFFDSGPRELFLSISILLPIIGIGIYPDFVLSLASDKVESILSNYFYG.

The next 13 membrane-spanning stretches (helical) occupy residues 4–24 (FPWL…MLFL), 35–55 (YTIS…CYNF), 87–107 (IGTI…AFPV), 134–154 (LLLF…LLSM), 167–187 (FILY…GISL), 211–231 (ILFY…IPLH), 242–262 (HYST…YGLV), 272–292 (AHSM…IYAA), 305–325 (IAYS…SITD), 330–350 (GAIL…FLAG), 386–406 (LALP…GIIT), 416–436 (IFII…LLSM), and 462–482 (LFLS…PDFV).

The protein belongs to the complex I subunit 4 family.

It localises to the plastid. The protein localises to the chloroplast thylakoid membrane. It carries out the reaction a plastoquinone + NADH + (n+1) H(+)(in) = a plastoquinol + NAD(+) + n H(+)(out). The catalysed reaction is a plastoquinone + NADPH + (n+1) H(+)(in) = a plastoquinol + NADP(+) + n H(+)(out). The chain is NAD(P)H-quinone oxidoreductase chain 4, chloroplastic from Crucihimalaya wallichii (Rock-cress).